Consider the following 974-residue polypeptide: Bifunctional glutamine synthetase adenylyltransferase/adenylyl-removing enzyme (974 aa).

The interval 1 to 464 is adenylyl removase; that stretch reads MKNAFLKTQL…HYAALFENEQ (464 aa). The segment at 468-974 is adenylyl transferase; that stretch reads LEIGNLVFTG…YSIFKQVMKY (507 aa).

It belongs to the GlnE family. Mg(2+) is required as a cofactor.

The enzyme catalyses [glutamine synthetase]-O(4)-(5'-adenylyl)-L-tyrosine + phosphate = [glutamine synthetase]-L-tyrosine + ADP. The catalysed reaction is [glutamine synthetase]-L-tyrosine + ATP = [glutamine synthetase]-O(4)-(5'-adenylyl)-L-tyrosine + diphosphate. Its function is as follows. Involved in the regulation of glutamine synthetase GlnA, a key enzyme in the process to assimilate ammonia. When cellular nitrogen levels are high, the C-terminal adenylyl transferase (AT) inactivates GlnA by covalent transfer of an adenylyl group from ATP to specific tyrosine residue of GlnA, thus reducing its activity. Conversely, when nitrogen levels are low, the N-terminal adenylyl removase (AR) activates GlnA by removing the adenylyl group by phosphorolysis, increasing its activity. The regulatory region of GlnE binds the signal transduction protein PII (GlnB) which indicates the nitrogen status of the cell. This is Bifunctional glutamine synthetase adenylyltransferase/adenylyl-removing enzyme from Bartonella henselae (strain ATCC 49882 / DSM 28221 / CCUG 30454 / Houston 1) (Rochalimaea henselae).